Reading from the N-terminus, the 89-residue chain is Small ribosomal subunit protein uS15 (89 aa).

A disordered region spans residues 1-25 (MSLDTTEKQQLINTHQTHGTDTGSA). Polar residues predominate over residues 8–25 (KQQLINTHQTHGTDTGSA).

This sequence belongs to the universal ribosomal protein uS15 family. As to quaternary structure, part of the 30S ribosomal subunit. Forms a bridge to the 50S subunit in the 70S ribosome, contacting the 23S rRNA.

Its function is as follows. One of the primary rRNA binding proteins, it binds directly to 16S rRNA where it helps nucleate assembly of the platform of the 30S subunit by binding and bridging several RNA helices of the 16S rRNA. In terms of biological role, forms an intersubunit bridge (bridge B4) with the 23S rRNA of the 50S subunit in the ribosome. The protein is Small ribosomal subunit protein uS15 of Synechococcus sp. (strain CC9902).